Consider the following 465-residue polypeptide: Transposase for insertion sequence IS1202 (465 aa).

In terms of domain architecture, Integrase catalytic spans 157–340 (HPSRPRKKFA…APNPSERNLI (184 aa)).

Required for the transposition of the insertion element. The polypeptide is Transposase for insertion sequence IS1202 (Streptococcus pneumoniae).